Consider the following 240-residue polypeptide: Eukaryotic translation initiation factor 4E-2 (240 aa).

Positions 1 to 29 (MVVMDSPVSGRMADQNIDPNTTTSPSPIE) are disordered. The span at 17–26 (IDPNTTTSPS) shows a compositional bias: polar residues. 2 EIF4G-binding regions span residues 65 to 68 (HCFQ) and 75 to 111 (FDNP…NNIH). Residues 83–88 (NQVIWG), lysine 115, and 133–134 (WE) each bind mRNA. The cysteines at positions 138 and 176 are disulfide-linked. Residues 159 to 168 (NTLLALVGEQ) are EIF4G-binding. Residues 183–188 (RTRGDR) and 228–232 (KTLDR) contribute to the mRNA site.

The protein belongs to the eukaryotic initiation factor 4E family. As to quaternary structure, EIF4F is a multi-subunit complex, the composition of which varies with external and internal environmental conditions. It is composed of at least EIF4A, EIF4E and EIF4G. EIF4E is also known to interact with other partners. In higher plants two isoforms of EIF4F have been identified, named isoform EIF4F and isoform EIF(iso)4F. Isoform EIF4F has subunits p220 and p26, whereas isoform EIF(iso)4F has subunits p82 and p28. In terms of processing, according to the redox status, the Cys-138-Cys-176 disulfide bridge may have a role in regulating protein function by affecting its ability to bind capped mRNA.

It localises to the nucleus. Its subcellular location is the cytoplasm. In terms of biological role, component of the protein complex eIF4F, which is involved in the recognition of the mRNA cap, ATP-dependent unwinding of 5'-terminal secondary structure and recruitment of mRNA to the ribosome. Recognizes and binds the 7-methylguanosine-containing mRNA cap during an early step in the initiation of protein synthesis and facilitates ribosome binding by inducing the unwinding of the mRNAs secondary structures. The protein is Eukaryotic translation initiation factor 4E-2 of Arabidopsis thaliana (Mouse-ear cress).